We begin with the raw amino-acid sequence, 310 residues long: Protoheme IX farnesyltransferase (310 aa).

9 consecutive transmembrane segments (helical) span residues 31 to 51, 52 to 72, 102 to 119, 123 to 145, 151 to 171, 179 to 199, 225 to 245, 248 to 268, and 281 to 301; these read VMSLVIFTGFVGMWLAPDSIH, PLIAGIAVICIALGAGSAGAM, ALSFGLITGFFAVFFMAL, ILASFLLLFTIFYYICIYTIWLK, NIVIGGVSGALPPVIGHAAVS, IILFLIIFIWTPPHSWAIALF, ILIYSIILFIVSLMPFFIGMN, IYLIIVCIIGLVFLYYAFSLF, and FTYSIFYLCFIFILLSSTSTI.

The protein belongs to the UbiA prenyltransferase family. Protoheme IX farnesyltransferase subfamily.

The protein resides in the cell inner membrane. The enzyme catalyses heme b + (2E,6E)-farnesyl diphosphate + H2O = Fe(II)-heme o + diphosphate. It functions in the pathway porphyrin-containing compound metabolism; heme O biosynthesis; heme O from protoheme: step 1/1. In terms of biological role, converts heme B (protoheme IX) to heme O by substitution of the vinyl group on carbon 2 of heme B porphyrin ring with a hydroxyethyl farnesyl side group. In Rickettsia prowazekii (strain Madrid E), this protein is Protoheme IX farnesyltransferase.